Consider the following 482-residue polypeptide: MTSGTEQATLNTEENGSDSDHLSKEPIAMPALDWDGPTDSNNPRNFSTPKKVFITACLASLVCISTFGSSVMSPASGQLIHEFGISKELSILATALYVLGFAVGPLLFGPASEVLGRKYPLSVGVFLFAIFSIPIAVAKNVATIFVCRFLCGTFAAAPLAIAGGGLADLWEPLSRGIAVAGFASATFLGPVLGPLVGGFVTKSHLGWRWTQWLSIIFSLVFLAIYFVFCPETYSPIVLARLAKKRGQMPPGGKVDFKQLAKVYMLRPFIMLVQEPILALLTLYMGFIYGFLYLCFEAFPIAFEEHRGWDIGIGSLPFLSITVGVLIGVVIIIVHTMTRMRRKLETVGDAPEERLVPMMIGSILMPAGIFWFAWTSNTSLPWAPQVVSGVFIGCGILLIFLQGMNYIIDVYKVMANSAISINAMFRGLLGAGFPLFASYMFDNLGVPWAMSLLGFLCVALVPVPFLFFIYGERIRKWSKFTAH.

The segment covering 1 to 14 has biased composition (polar residues); that stretch reads MTSGTEQATLNTEE. Positions 1 to 22 are disordered; it reads MTSGTEQATLNTEENGSDSDHL. N-linked (GlcNAc...) asparagine glycans are attached at residues Asn15 and Asn45. Helical transmembrane passes span 52 to 72, 89 to 109, 125 to 145, 149 to 169, 176 to 196, 209 to 229, 275 to 295, 312 to 332, and 354 to 374; these read VFIT…SSVM, LSIL…LLFG, VFLF…ATIF, FLCG…LADL, GIAV…GPLV, WTQW…FVFC, PILA…YLCF, IGSL…VIII, and LVPM…FAWT. N-linked (GlcNAc...) asparagine glycosylation is present at Asn376. Helical transmembrane passes span 379 to 399, 427 to 447, and 448 to 468; these read LPWA…LLIF, LLGA…GVPW, and AMSL…LFFI.

Belongs to the major facilitator superfamily. CAR1 family.

Its subcellular location is the membrane. Functionally, MFS-type transporter; part of the tra gene cluster that produces terrestric acid. The clavatol biosynthesis cluster cla and the terrestric acid cluster tra are both involved in the production of peniphenones and penilactones. This Penicillium crustosum (Blue mold fungus) protein is MFS-type transporter traF.